We begin with the raw amino-acid sequence, 458 residues long: Preferentially expressed antigen in melanoma-like protein 1 (458 aa).

Residues 99–126 (RCKLQVLDLRVMPLKLWNRLPVFGTAGC) form an LRR 1; degenerate repeat. Residues 176-200 (SLCCCKLQIWAMSMYYHRKLLEILD) form an LRR 2; degenerate repeat. One copy of the LRR 3; degenerate repeat lies at 201 to 227 (LDSVQELRMYCISNPVCLLNFAPYLGR). One copy of the LRR 4; degenerate repeat lies at 228 to 263 (MRNLRCLILSHLWQTFSMTPVEKQQVITQFTSQFLK). 5 LRR repeats span residues 264–289 (LKCLQILHLDTVFFLEGHLDELFWWL), 290–321 (KTPLETLSVIDCNLSKSDWFHISEFQCTSQLK), 322–340 (HLNLKWVKLTHLSPEPLRV), 346–373 (ASTLTSLDLEGCQMMDSQLSAILPALRC), and 374–398 (CTQLTKFNFHGNYISMPILRELAYN).

Belongs to the PRAME family. In terms of tissue distribution, specifically expressed in testis (at protein level).

The protein resides in the cytoplasm. It is found in the cytoplasmic vesicle. The protein localises to the secretory vesicle. It localises to the acrosome. Its subcellular location is the cell projection. The protein resides in the cilium. It is found in the flagellum. May play a role in acrosome development and also in sperm maturation and motility. This is Preferentially expressed antigen in melanoma-like protein 1 from Mus musculus (Mouse).